Reading from the N-terminus, the 102-residue chain is uncharacterized protein (102 aa).

A signal peptide spans 1 to 19 (MFLFCFVLFCSLVFPLARG).

This is an uncharacterized protein from Saccharomyces cerevisiae (strain ATCC 204508 / S288c) (Baker's yeast).